The primary structure comprises 698 residues: MSARPTDASMEPRAVPHSYRKRVHSTVELAALVYQPLEASGALLSILRGKLYHQRNVRSVLDVVAVPTDTGDQGHSAASKVRVEYLAPPSNKANRNSSSNISCALRDDIQRGSRAAATCNSSSPPTPPAFLEGCCKMCLLDPTVLEAAELWPDPTSVTQNSTPVFLLGAGIPGARVTQQLEAALQTGQLPRKAADLLQQLHERLAASPPSVSLTENQDGDPQAQDSLRAVAAPPSPSSRKRGSYVGAVEVTFASRTVELSYRNYTMSELLSMVLPLREDADLVALSGFEQVGHIAHVNLSAAHLPYADVIGQVILDCNETVSVVVNKVDAISSVFREFKMNIIGERRRADDLGGDVGVGANVSDSGEVGDSLTAEEKAVIALEASSLNSPAEARLNRMLTAAVRQHGCCFRVPYNRVYWNSRLSFEHARLVGQMRPGDVLFDVMAGVGPFAVPAAKKGVKVFANDLNPVAAQYMKVNAELNRLPANSFHVFNMDGRHFLNSVLFDSITGAAASKIEATATSHPGCVCTGRRHVTMNLPAVAVEFLDVFQPLSNTSSLAGEQQSNAATAVAVNERWNRLPAHVEPNDIDQGTLFHVYSFSAAEDLIADAVRQVEANLGYTLPPESIEEVLMVRDVAPTKRMMCVSFTLPPAFWANLLASQPGNDGASFTHAETVSALVEEGAEPTIKRAKADALLTRGV.

A disordered region spans residues 207-242; sequence SPPSVSLTENQDGDPQAQDSLRAVAAPPSPSSRKRG. S-adenosyl-L-methionine contacts are provided by residues H427, 465–466, 494–495, and N536; these read DL and DG.

The protein belongs to the class I-like SAM-binding methyltransferase superfamily. TRM5/TYW2 family. As to quaternary structure, monomer.

The protein localises to the mitochondrion matrix. The protein resides in the nucleus. It is found in the cytoplasm. The catalysed reaction is guanosine(37) in tRNA + S-adenosyl-L-methionine = N(1)-methylguanosine(37) in tRNA + S-adenosyl-L-homocysteine + H(+). In terms of biological role, specifically methylates the N1 position of guanosine-37 in various cytoplasmic and mitochondrial tRNAs. Methylation is not dependent on the nature of the nucleoside 5' of the target nucleoside. This is the first step in the biosynthesis of wybutosine (yW), a modified base adjacent to the anticodon of tRNAs and required for accurate decoding. The chain is tRNA (guanine(37)-N(1))-methyltransferase from Leishmania braziliensis.